We begin with the raw amino-acid sequence, 423 residues long: Glutamyl-tRNA reductase (423 aa).

Substrate is bound by residues 51-54 (TCNR), S99, 104-106 (EDQ), and Q110. Residue C52 is the Nucleophile of the active site. 179 to 184 (GSGEMG) provides a ligand contact to NADP(+).

The protein belongs to the glutamyl-tRNA reductase family. In terms of assembly, homodimer.

The enzyme catalyses (S)-4-amino-5-oxopentanoate + tRNA(Glu) + NADP(+) = L-glutamyl-tRNA(Glu) + NADPH + H(+). Its pathway is porphyrin-containing compound metabolism; protoporphyrin-IX biosynthesis; 5-aminolevulinate from L-glutamyl-tRNA(Glu): step 1/2. Its function is as follows. Catalyzes the NADPH-dependent reduction of glutamyl-tRNA(Glu) to glutamate 1-semialdehyde (GSA). In Methanoculleus marisnigri (strain ATCC 35101 / DSM 1498 / JR1), this protein is Glutamyl-tRNA reductase.